A 618-amino-acid chain; its full sequence is Manganese lipoxygenase (618 aa).

Positions 1-16 (MRSRILAIVFAARHVA) are cleaved as a signal peptide. Over residues 36 to 45 (SSTTVLPSPT) the composition is skewed to low complexity. The disordered stretch occupies residues 36–58 (SSTTVLPSPTQYTLPNNDPNQGA). The span at 46–58 (QYTLPNNDPNQGA) shows a compositional bias: polar residues. The Lipoxygenase domain occupies 47 to 618 (YTLPNNDPNQ…PAVNPFFLSV (572 aa)). Asn-60, Asn-91, Asn-106, Asn-116, and Asn-157 each carry an N-linked (GlcNAc...) asparagine glycan. 4 residues coordinate Mn(2+): His-290, His-294, His-478, and Asn-482. A glycan (N-linked (GlcNAc...) asparagine) is linked at Asn-513. Val-618 provides a ligand contact to Mn(2+).

This sequence belongs to the lipoxygenase family. Manganese lipoxygenase subfamily. It depends on Mn(2+) as a cofactor. In terms of processing, N- and O-glycosylated.

The protein localises to the secreted. The enzyme catalyses (9Z,12Z)-octadecadienoate + O2 = (11S)-hydroperoxy-(9Z,12Z)-octadecadienoate. The catalysed reaction is (9Z,12Z)-octadecadienoate + O2 = (13R)-hydroperoxy-(9Z,11E)-octadecadienoate. It catalyses the reaction (9Z,12Z,15Z)-octadecatrienoate + O2 = (11S)-hydroperoxy-(9Z,12Z,15Z)-octadecatrienoate. It carries out the reaction (9Z,12Z,15Z)-octadecatrienoate + O2 = (13R)-hydroperoxy-(9Z,11E,15Z)-octadecatrienoate. Its function is as follows. Lipoxygenase that metabolizes linoleic and alpha-linolenic acids to 11S- and 13R-hydroperoxy fatty acids. At the end of lipoxygenation, the intermediate product 11S-HPODE from linoleic acid is then transformed into 13R-HPODE as the final product. It also acts on alpha-linolenic acid producing 11S-HPOTrE and 13R-HPOTrE with subsequent transformation of 11S-HPOTrE to 13R-HPOTrE as final product. This is Manganese lipoxygenase from Gaeumannomyces avenae (Oat take-all root rot fungus).